We begin with the raw amino-acid sequence, 484 residues long: Zinc metalloproteinase-disintegrin jerdonitin (484 aa).

The first 20 residues, 1-20 (MIQVLLVTICLAVFPYQGSS), serve as a signal peptide directing secretion. A propeptide spanning residues 21-191 (IILESGNIDD…KLSQIMIPPE (171 aa)) is cleaved from the precursor. Q192 is modified (pyrrolidone carboxylic acid). The Peptidase M12B domain occupies 194-392 (RYIELVIVAD…FTSRCLYNEP (199 aa)). Ca(2+) contacts are provided by E197 and D281. 3 cysteine pairs are disulfide-bonded: C305–C387, C345–C369, and C347–C352. H330 is a Zn(2+) binding site. E331 is an active-site residue. The Zn(2+) site is built by H334 and H340. C387, N390, V402, N405, E409, E412, and D415 together coordinate Ca(2+). The Disintegrin domain maps to 400-484 (PSVCGNYYME…AGCPRNPFHA (85 aa)). Disulfide bonds link C403–C422, C414–C432, C416–C427, C426–C449, C440–C446, C445–C470, and C458–C477. Residues 462–464 (RGD) carry the Cell attachment site motif.

This sequence belongs to the venom metalloproteinase (M12B) family. P-II subfamily. P-IIb sub-subfamily. Monomer. Zn(2+) serves as cofactor. In terms of processing, the N-terminus is blocked. As to expression, expressed by the venom gland.

The protein resides in the secreted. Its activity is regulated as follows. Fibrinogenolytic activity is completely inhibited by EDTA, but not by PMSF. In terms of biological role, snake venom zinc metalloproteinase that inhibits ADP-induced human platelet aggregation (IC(50)=120 nM (native) and IC(50)=248 nM (recombinant)). May act by binding to the receptor GPIIb/GPIIIa (ITGA2B/ITGB3) on the platelet surface. Degrades the alpha-chain of fibrinogen completely and the beta-chain partially, leaving the gamma chain intact. Also inhibits the growth of several cell lines, including human liver cancer cells (Bel7402), human leukemia cells (K562) and human gastric carcinoma cells (BGC823). This Protobothrops jerdonii (Jerdon's pitviper) protein is Zinc metalloproteinase-disintegrin jerdonitin.